The following is a 373-amino-acid chain: UDP-N-acetylglucosamine--N-acetylmuramyl-(pentapeptide) pyrophosphoryl-undecaprenol N-acetylglucosamine transferase (373 aa).

Residues 13-15 (TGG), asparagine 124, arginine 164, serine 192, and glutamine 293 contribute to the UDP-N-acetyl-alpha-D-glucosamine site.

This sequence belongs to the glycosyltransferase 28 family. MurG subfamily.

It is found in the cell inner membrane. The catalysed reaction is di-trans,octa-cis-undecaprenyl diphospho-N-acetyl-alpha-D-muramoyl-L-alanyl-D-glutamyl-meso-2,6-diaminopimeloyl-D-alanyl-D-alanine + UDP-N-acetyl-alpha-D-glucosamine = di-trans,octa-cis-undecaprenyl diphospho-[N-acetyl-alpha-D-glucosaminyl-(1-&gt;4)]-N-acetyl-alpha-D-muramoyl-L-alanyl-D-glutamyl-meso-2,6-diaminopimeloyl-D-alanyl-D-alanine + UDP + H(+). Its pathway is cell wall biogenesis; peptidoglycan biosynthesis. Its function is as follows. Cell wall formation. Catalyzes the transfer of a GlcNAc subunit on undecaprenyl-pyrophosphoryl-MurNAc-pentapeptide (lipid intermediate I) to form undecaprenyl-pyrophosphoryl-MurNAc-(pentapeptide)GlcNAc (lipid intermediate II). This Allorhizobium ampelinum (strain ATCC BAA-846 / DSM 112012 / S4) (Agrobacterium vitis (strain S4)) protein is UDP-N-acetylglucosamine--N-acetylmuramyl-(pentapeptide) pyrophosphoryl-undecaprenol N-acetylglucosamine transferase.